Here is a 799-residue protein sequence, read N- to C-terminus: Ribosome-releasing factor 2, mitochondrial (799 aa).

One can recognise a tr-type G domain in the interval serine 19–leucine 306. Residues alanine 28–threonine 35, aspartate 93–histidine 97, and asparagine 145–aspartate 148 each bind GTP.

This sequence belongs to the TRAFAC class translation factor GTPase superfamily. Classic translation factor GTPase family. EF-G/EF-2 subfamily.

It localises to the mitochondrion. Functionally, mitochondrial GTPase that mediates the disassembly of ribosomes from messenger RNA at the termination of mitochondrial protein biosynthesis. Not involved in the GTP-dependent ribosomal translocation step during translation elongation. The chain is Ribosome-releasing factor 2, mitochondrial from Vanderwaltozyma polyspora (strain ATCC 22028 / DSM 70294 / BCRC 21397 / CBS 2163 / NBRC 10782 / NRRL Y-8283 / UCD 57-17) (Kluyveromyces polysporus).